We begin with the raw amino-acid sequence, 630 residues long: Probable potassium transport system protein Kup (630 aa).

A run of 12 helical transmembrane segments spans residues 17–37 (LAIA…LYSL), 51–71 (PSAI…VVGI), 105–125 (ITGL…GDAV), 144–164 (PQLS…LFWI), 175–195 (LFGP…IYHI), 218–238 (VLLA…AEAL), 255–275 (YVLV…LLLL), 283–303 (PFFL…STVA), 344–364 (IYVP…VIGF), 374–394 (YGIA…VVMV), 402–422 (LLVA…FGAN), and 428–448 (QGGW…MTWY).

It belongs to the HAK/KUP transporter (TC 2.A.72) family.

Its subcellular location is the cell inner membrane. The catalysed reaction is K(+)(in) + H(+)(in) = K(+)(out) + H(+)(out). Transport of potassium into the cell. Likely operates as a K(+):H(+) symporter. The chain is Probable potassium transport system protein Kup from Burkholderia mallei (strain NCTC 10247).